We begin with the raw amino-acid sequence, 110 residues long: uncharacterized protein (110 aa).

Helical transmembrane passes span 21-41 (IQLA…PQIC) and 63-83 (PSMI…IIVV).

The protein resides in the membrane. This is an uncharacterized protein from Saccharomyces cerevisiae (strain ATCC 204508 / S288c) (Baker's yeast).